We begin with the raw amino-acid sequence, 433 residues long: MSTSAKTQSAPDQFFSASLAEADPEIAAAIAGELGRQRHEIELIASENIVSRAVLEAQGSVMTNKYAEGYPGHRYYGGCEFVDVAENLAIDRAKKLFGAGFANVQPNSGSQMNQAVFLALLQPGDTFMGLDLAAGGHLTHGATVNMSGKWFKPVHYTVRREDGIIDMDEVAKIAEANKPKLIIAGGSAYSRAWDFKRFREIADSVGAYFMVDMAHFAGLVAGGVHASPVPHAHVCTTTTHKSLRGPRGGLILCNDEALAKKFNSAIFPGLQGGPLMHVIAAKAVAFKEALQPDFKVYAKNVVENAKALAETLRGHGFDIVSGGTDNHLMLVDLRPKALKGNVSEKALVRAGITCNKNGIPFDPEKPFVTSGIRLGTPAATTRGFGVAEFQQVGGMIAEVLNAIAQSSDGQAPLVEAAIRQRVKELTDRFPIYS.

Residues L132 and 136–138 (GHL) each bind (6S)-5,6,7,8-tetrahydrofolate. K241 is modified (N6-(pyridoxal phosphate)lysine).

It belongs to the SHMT family. As to quaternary structure, homodimer. The cofactor is pyridoxal 5'-phosphate.

It is found in the cytoplasm. It catalyses the reaction (6R)-5,10-methylene-5,6,7,8-tetrahydrofolate + glycine + H2O = (6S)-5,6,7,8-tetrahydrofolate + L-serine. It participates in one-carbon metabolism; tetrahydrofolate interconversion. Its pathway is amino-acid biosynthesis; glycine biosynthesis; glycine from L-serine: step 1/1. Catalyzes the reversible interconversion of serine and glycine with tetrahydrofolate (THF) serving as the one-carbon carrier. This reaction serves as the major source of one-carbon groups required for the biosynthesis of purines, thymidylate, methionine, and other important biomolecules. Also exhibits THF-independent aldolase activity toward beta-hydroxyamino acids, producing glycine and aldehydes, via a retro-aldol mechanism. In Rhodopseudomonas palustris (strain BisA53), this protein is Serine hydroxymethyltransferase.